A 40-amino-acid chain; its full sequence is MTQSKSNPNEQNVELNRTSLYWGLLLIFVLAVLFSNYFFN.

Residues 19–39 (SLYWGLLLIFVLAVLFSNYFF) form a helical membrane-spanning segment.

This sequence belongs to the PsbL family. PSII is composed of 1 copy each of membrane proteins PsbA, PsbB, PsbC, PsbD, PsbE, PsbF, PsbH, PsbI, PsbJ, PsbK, PsbL, PsbM, PsbT, PsbX, PsbY, PsbZ, Psb30/Ycf12, at least 3 peripheral proteins of the oxygen-evolving complex and a large number of cofactors. It forms dimeric complexes.

The protein resides in the plastid. Its subcellular location is the chloroplast thylakoid membrane. Functionally, one of the components of the core complex of photosystem II (PSII). PSII is a light-driven water:plastoquinone oxidoreductase that uses light energy to abstract electrons from H(2)O, generating O(2) and a proton gradient subsequently used for ATP formation. It consists of a core antenna complex that captures photons, and an electron transfer chain that converts photonic excitation into a charge separation. This subunit is found at the monomer-monomer interface and is required for correct PSII assembly and/or dimerization. This chain is Photosystem II reaction center protein L, found in Nandina domestica (Heavenly bamboo).